The sequence spans 236 residues: Thymidylate kinase (236 aa).

An ATP-binding site is contributed by 9–16; it reads GPEGSGKS.

The protein belongs to the thymidylate kinase family.

The enzyme catalyses dTMP + ATP = dTDP + ADP. In terms of biological role, phosphorylation of dTMP to form dTDP in both de novo and salvage pathways of dTTP synthesis. The protein is Thymidylate kinase of Herpetosiphon aurantiacus (strain ATCC 23779 / DSM 785 / 114-95).